An 81-amino-acid chain; its full sequence is Styelin-D (81 aa).

The first 22 residues, 1–22 (MQMKATILIVLVALFMIQQSEA), serve as a signal peptide directing secretion. Tryptophan 24 is modified (6'-bromotryptophan). Arginine 26 bears the 3,4-dihydroxyarginine mark. Lysine 27, lysine 30, and lysine 34 each carry 4,5-dihydroxylysine. Tyrosine 36 and tyrosine 37 each carry 3',4'-dihydroxyphenylalanine. Lysine 38 bears the 4,5-dihydroxylysine mark. 5-hydroxylysine is present on lysine 40. Tyrosine 41 and tyrosine 42 each carry 3',4'-dihydroxyphenylalanine. Residue lysine 44 is modified to 5-hydroxylysine. The residue at position 54 (leucine 54) is a Leucine amide. A propeptide spans 56 to 81 (DMTDEEFQDFMKEVEQAREEELQSRQ) (removed in mature form).

In terms of processing, contains L-DOPA (3',4'-dihydroxyphenylalanine). In terms of tissue distribution, hemocytes and pharyngeal tissues.

Its subcellular location is the secreted. Functionally, bactericidal against several Gram-positive and Gram-negative bacteria. Plays a significant role in the innate immune mechanisms of S.clava. The polypeptide is Styelin-D (Styela clava (Sea squirt)).